The following is a 187-amino-acid chain: uncharacterized protein (187 aa).

This is an uncharacterized protein from Homo sapiens (Human).